A 140-amino-acid polypeptide reads, in one-letter code: FAD synthase (140 aa).

ATP is bound by residues 10–11, 15–18, and Asn-93; these read TF and HPGH.

Belongs to the archaeal FAD synthase family. Homodimer. The cofactor is a divalent metal cation.

The enzyme catalyses FMN + ATP + H(+) = FAD + diphosphate. It functions in the pathway cofactor biosynthesis; FAD biosynthesis; FAD from FMN: step 1/1. Catalyzes the transfer of the AMP portion of ATP to flavin mononucleotide (FMN) to produce flavin adenine dinucleotide (FAD) coenzyme. In Methanocella arvoryzae (strain DSM 22066 / NBRC 105507 / MRE50), this protein is FAD synthase.